The following is a 191-amino-acid chain: UPF0312 protein Sbal195_3198 (191 aa).

The N-terminal stretch at 1-22 is a signal peptide; that stretch reads MKKQLFSALIGASLLAPMAASA.

It belongs to the UPF0312 family. Type 1 subfamily.

The protein resides in the periplasm. The protein is UPF0312 protein Sbal195_3198 of Shewanella baltica (strain OS195).